A 423-amino-acid chain; its full sequence is F-box/LRR-repeat protein 2 (423 aa).

In terms of domain architecture, F-box spans 9–55 (GRINKKLPKELLLRIFSFLDIVTLCRCAQISKAWNILALDGSNWQRI). LRR repeat units lie at residues 61–87 (QTDV…SLRG), 88–113 (CIGV…NLNG), 114–139 (CTKI…DLTS), 140–165 (CVSI…NLSW), 166–191 (CDQI…LLRG), 192–217 (CTQL…NLQS), 218–243 (CSRI…CLSG), 244–269 (CSNL…EAAR), 270–295 (CSHL…DLEE), 296–321 (CILI…SLSH), 322–350 (CELI…ELDN), 351–375 (CLLI…ELYD), and 376–401 (CQQV…AYFA). The segment at 80-90 (LRKLSLRGCIG) is interaction with Calmodulin. Lys-201 is covalently cross-linked (Glycyl lysine isopeptide (Lys-Gly) (interchain with G-Cter in ubiquitin)). Phosphothreonine is present on Thr-404. Cys-420 carries S-geranylgeranyl cysteine lipidation. The CAAX motif motif lies at 420–423 (CVIL).

As to quaternary structure, part of the SCF (SKP1-CUL1-F-box) E3 ubiquitin-protein ligase complex SCF(FBXL2) composed of CUL1, SKP1, RBX1 and FBXL2. Interacts with calmodulin; may antagonize substrate ubiquitination by SCF(FBXL2). May interact with PIK3R1. Interacts with PTPN13. In terms of processing, phosphorylated by GSK-beta (GSK3B), promoting recognition by FBXO3, leading to its ubiquitination by the SCF(FBXO3) complex. Post-translationally, ubiquitinated at Lys-201 by the SCF(FBXO3) complex in response to lipopolysaccharide (LPS), leading to its degradation by the proteasome.

Its subcellular location is the membrane. It participates in protein modification; protein ubiquitination. Calcium-activated substrate recognition component of the SCF (SKP1-cullin-F-box protein) E3 ubiquitin-protein ligase complex, SCF(FBXL2), which mediates the ubiquitination and subsequent proteasomal degradation of target proteins. Unlike many F-box proteins, FBXL2 does not seem to target phosphodegron within its substrates but rather calmodulin-binding motifs and is thereby antagonized by calmodulin. This is the case for the cyclins CCND2 and CCND3 which polyubiquitination and subsequent degradation are inhibited by calmodulin. Through CCND2 and CCND3 degradation induces cell-cycle arrest in G(0). SCF(FBXL2) also mediates PIK3R2 ubiquitination and proteasomal degradation thereby regulating phosphatidylinositol 3-kinase signaling and autophagy. PCYT1A monoubiquitination by SCF(FBXL2) and subsequent degradation regulates synthesis of phosphatidylcholine, which is utilized for formation of membranes and of pulmonary surfactant. The SCF(FBXL2) complex acts as a regulator of inflammation by mediating ubiquitination and degradation of TRAF proteins (TRAF1, TRAF2, TRAF3, TRAF4, TRAF5 and TRAF6). The SCF(FBXL2) complex acts as a negative regulator of the NLRP3 inflammasome by mediating ubiquitination and degradation of NLRP3. This Pongo abelii (Sumatran orangutan) protein is F-box/LRR-repeat protein 2.